Here is an 84-residue protein sequence, read N- to C-terminus: Large ribosomal subunit protein bL27 (84 aa).

A disordered region spans residues 1 to 27 (MAHKKGQGASRNGRDSKSKRLGVKVGA).

This sequence belongs to the bacterial ribosomal protein bL27 family.

This is Large ribosomal subunit protein bL27 from Chlamydia pneumoniae (Chlamydophila pneumoniae).